We begin with the raw amino-acid sequence, 145 residues long: Peptide methionine sulfoxide reductase MsrB (145 aa).

Positions 4–127 (KEELRQRIGD…NSAALKFIPY (124 aa)) constitute a MsrB domain. The active-site Nucleophile is the C116.

Belongs to the MsrB Met sulfoxide reductase family.

It carries out the reaction L-methionyl-[protein] + [thioredoxin]-disulfide + H2O = L-methionyl-(R)-S-oxide-[protein] + [thioredoxin]-dithiol. The protein is Peptide methionine sulfoxide reductase MsrB of Streptococcus equi subsp. zooepidemicus (strain H70).